Here is a 197-residue protein sequence, read N- to C-terminus: ATP-dependent Clp protease proteolytic subunit 3 (197 aa).

The active-site Nucleophile is Ser96. Residue His121 is part of the active site.

This sequence belongs to the peptidase S14 family. As to quaternary structure, fourteen ClpP subunits assemble into 2 heptameric rings which stack back to back to give a disk-like structure with a central cavity, resembling the structure of eukaryotic proteasomes.

Its subcellular location is the cytoplasm. It catalyses the reaction Hydrolysis of proteins to small peptides in the presence of ATP and magnesium. alpha-casein is the usual test substrate. In the absence of ATP, only oligopeptides shorter than five residues are hydrolyzed (such as succinyl-Leu-Tyr-|-NHMec, and Leu-Tyr-Leu-|-Tyr-Trp, in which cleavage of the -Tyr-|-Leu- and -Tyr-|-Trp bonds also occurs).. Functionally, cleaves peptides in various proteins in a process that requires ATP hydrolysis. Has a chymotrypsin-like activity. Plays a major role in the degradation of misfolded proteins. The chain is ATP-dependent Clp protease proteolytic subunit 3 from Prochlorococcus marinus (strain MIT 9313).